Reading from the N-terminus, the 242-residue chain is Triosephosphate isomerase (242 aa).

9 to 11 (NWK) is a binding site for substrate. The active-site Electrophile is His-99. Glu-169 acts as the Proton acceptor in catalysis. Residues Gly-175, Ser-207, and 228–229 (GG) contribute to the substrate site.

This sequence belongs to the triosephosphate isomerase family. In terms of assembly, homodimer.

Its subcellular location is the cytoplasm. It catalyses the reaction D-glyceraldehyde 3-phosphate = dihydroxyacetone phosphate. The protein operates within carbohydrate biosynthesis; gluconeogenesis. It functions in the pathway carbohydrate degradation; glycolysis; D-glyceraldehyde 3-phosphate from glycerone phosphate: step 1/1. Functionally, involved in the gluconeogenesis. Catalyzes stereospecifically the conversion of dihydroxyacetone phosphate (DHAP) to D-glyceraldehyde-3-phosphate (G3P). The sequence is that of Triosephosphate isomerase from Mycoplasma mobile (strain ATCC 43663 / 163K / NCTC 11711) (Mesomycoplasma mobile).